The following is a 1808-amino-acid chain: Tenascin (1808 aa).

Residues 1–22 (MGLPSQVLACAILGLLYQHASG) form the signal peptide. The propeptide occupies 23 to 33 (GLIKRIIRQKR). Asn38 carries N-linked (GlcNAc...) asparagine glycosylation. An O-linked (Xyl...) (chondroitin sulfate) serine glycan is attached at Ser72. Residues 118–142 (DIKDLLSRLEELEGLVSSLREQCAS) adopt a coiled-coil conformation. N-linked (GlcNAc...) asparagine glycosylation is found at Asn168 and Asn186. Residues 176–188 (CVCEPGWKGPNCS) form the EGF-like 1; incomplete domain. EGF-like domains lie at 188–219 (SEPA…EDCS), 219–250 (SQAA…PDCG), 250–281 (GEEL…EDCN), 281–312 (NEPL…EDCG), 312–343 (GELI…EDCG), 343–374 (GELT…DDCS), 374–405 (SQKR…EDCG), 405–436 (GELR…EDCG), 436–467 (GELR…EDCG), 467–498 (GELR…EDCG), 498–529 (GELR…EDCG), 529–560 (GELS…EDCR), and 560–591 (RERS…IDCS). 39 cysteine pairs are disulfide-bonded: Cys192-Cys202, Cys196-Cys207, Cys209-Cys218, Cys223-Cys233, Cys227-Cys238, Cys240-Cys249, Cys254-Cys264, Cys258-Cys269, Cys271-Cys280, Cys285-Cys295, Cys289-Cys300, Cys302-Cys311, Cys316-Cys326, Cys320-Cys331, Cys333-Cys342, Cys347-Cys357, Cys351-Cys362, Cys364-Cys373, Cys378-Cys388, Cys382-Cys393, Cys395-Cys404, Cys409-Cys419, Cys413-Cys424, Cys426-Cys435, Cys440-Cys450, Cys444-Cys455, Cys457-Cys466, Cys471-Cys481, Cys475-Cys486, Cys488-Cys497, Cys502-Cys512, Cys506-Cys517, Cys519-Cys528, Cys533-Cys543, Cys537-Cys548, Cys550-Cys559, Cys564-Cys574, Cys568-Cys579, and Cys581-Cys590. Asn328 carries N-linked (GlcNAc...) asparagine glycosylation. 11 Fibronectin type-III domains span residues 595–685 (PPTE…LPAP), 686–775 (EGLK…TKLD), 776–866 (APSQ…DLDA), 867–957 (PRNL…TDLD), 958–1046 (NPKD…EEEP), 1047–1138 (ELGN…AHPE), 1139–1228 (VGEL…EAEP), 1229–1318 (EVDN…TVVG), 1319–1408 (SPKG…ALDS), 1409–1495 (PSGL…TGLD), and 1496–1584 (APKD…TGLL). 4 N-linked (GlcNAc...) asparagine glycosylation sites follow: Asn603, Asn643, Asn751, and Asn759. N-linked (GlcNAc...) asparagine glycans are attached at residues Asn1050, Asn1090, Asn1101, Asn1112, Asn1153, and Asn1183. An N-linked (GlcNAc...) asparagine glycan is attached at Asn1416. Residues 1582-1797 (GLLYPYPKDC…FAEMKLRPSS (216 aa)) enclose the Fibrinogen C-terminal domain. Residues Asn1736 and Asn1769 are each glycosylated (N-linked (GlcNAc...) asparagine).

This sequence belongs to the tenascin family. As to quaternary structure, homohexamer; disulfide-linked. A homotrimer may be formed in the triple coiled-coil region and may be stabilized by disulfide rings at both ends. Two of such half-hexabrachions may be disulfide linked within the central globule. Interacts with CSPG5. In terms of tissue distribution, expressed in the brain.

Its subcellular location is the secreted. The protein resides in the extracellular space. It localises to the extracellular matrix. Its function is as follows. Extracellular matrix protein implicated in guidance of migrating neurons as well as axons during development, synaptic plasticity as well as neuronal regeneration. Ligand for integrins alpha-8/beta-1, alpha-9/beta-1, alpha-V/beta-3 and alpha-V/beta-6. The polypeptide is Tenascin (TNC) (Gallus gallus (Chicken)).